Here is a 468-residue protein sequence, read N- to C-terminus: 6-phospho-beta-galactosidase (468 aa).

The D-galactose 6-phosphate site is built by glutamine 19, histidine 116, asparagine 159, glutamate 160, and asparagine 297. Residue glutamate 160 is the Proton donor of the active site. Glutamate 375 acts as the Nucleophile in catalysis. D-galactose 6-phosphate contacts are provided by serine 428, tryptophan 429, lysine 435, and tyrosine 437.

The protein belongs to the glycosyl hydrolase 1 family.

The catalysed reaction is a 6-phospho-beta-D-galactoside + H2O = D-galactose 6-phosphate + an alcohol. It participates in carbohydrate metabolism; lactose degradation; D-galactose 6-phosphate and beta-D-glucose from lactose 6-phosphate: step 1/1. The polypeptide is 6-phospho-beta-galactosidase (Streptococcus agalactiae serotype III (strain NEM316)).